A 126-amino-acid polypeptide reads, in one-letter code: Larval cuticle protein 2 (126 aa).

Residues 1–16 (MFKFVMILAVVGVATA) form the signal peptide. The region spanning 39-100 (ADGFDSSLHT…PSGAWIPTPP (62 aa)) is the Chitin-binding type R&amp;R domain.

Component of the larval cuticle. This is Larval cuticle protein 2 (Lcp2) from Drosophila melanogaster (Fruit fly).